The sequence spans 191 residues: Adenylate kinase (191 aa).

12–17 (GSGKTT) contributes to the ATP binding site. The interval 34–63 (STGDLLRAESAKKTERGLLIEKFTSQGELV) is NMP. AMP is bound by residues threonine 35, arginine 40, 61-63 (ELV), 88-91 (GYPR), and glutamine 95. Residues 130-136 (GRSRGAD) form an LID region. Arginine 131 is an ATP binding site. Residues arginine 133 and arginine 145 each coordinate AMP. Arginine 173 contributes to the ATP binding site.

The protein belongs to the adenylate kinase family. Monomer.

Its subcellular location is the cytoplasm. It catalyses the reaction AMP + ATP = 2 ADP. Its pathway is purine metabolism; AMP biosynthesis via salvage pathway; AMP from ADP: step 1/1. Functionally, catalyzes the reversible transfer of the terminal phosphate group between ATP and AMP. Plays an important role in cellular energy homeostasis and in adenine nucleotide metabolism. This is Adenylate kinase from Helicobacter pylori (strain Shi470).